Here is a 118-residue protein sequence, read N- to C-terminus: Protein TusC (118 aa).

This sequence belongs to the DsrF/TusC family. As to quaternary structure, heterohexamer, formed by a dimer of trimers. The hexameric TusBCD complex contains 2 copies each of TusB, TusC and TusD. The TusBCD complex interacts with TusE.

It is found in the cytoplasm. Functionally, part of a sulfur-relay system required for 2-thiolation of 5-methylaminomethyl-2-thiouridine (mnm(5)s(2)U) at tRNA wobble positions. The chain is Protein TusC from Salmonella typhi.